Consider the following 341-residue polypeptide: L-threonine 3-dehydrogenase (341 aa).

A Zn(2+)-binding site is contributed by C38. Active-site charge relay system residues include T40 and H43. The Zn(2+) site is built by H63, E64, C93, C96, C99, and C107. Residues I175, D195, R200, 262–264 (LGI), and 286–287 (IY) each bind NAD(+).

Belongs to the zinc-containing alcohol dehydrogenase family. Homotetramer. Zn(2+) serves as cofactor.

The protein localises to the cytoplasm. It carries out the reaction L-threonine + NAD(+) = (2S)-2-amino-3-oxobutanoate + NADH + H(+). It participates in amino-acid degradation; L-threonine degradation via oxydo-reductase pathway; glycine from L-threonine: step 1/2. Catalyzes the NAD(+)-dependent oxidation of L-threonine to 2-amino-3-ketobutyrate. The chain is L-threonine 3-dehydrogenase from Edwardsiella ictaluri (strain 93-146).